The primary structure comprises 382 residues: Opsin-VA (382 aa).

Residues 1–35 are Extracellular-facing; that stretch reads MELFPVAVNGVSHAEDPFSGPLTFIAPWNYKVLAT. A helical transmembrane segment spans residues 36-56; the sequence is LMFVVTAASLSENFAVMLVTF. At 57–67 the chain is on the cytoplasmic side; sequence RFTQLRKPLNY. A helical membrane pass occupies residues 68–88; the sequence is IIVNLSLADFLVSLTGGTISF. Residues 89–103 are Extracellular-facing; that stretch reads LTNYHGYFFLGKWAC. The cysteines at positions 103 and 180 are disulfide-linked. The chain crosses the membrane as a helical span at residues 104 to 124; that stretch reads VLEGFAVTYFGIVALWSLAVL. Topologically, residues 125-147 are cytoplasmic; sequence AFERFFVICRPLGNIRLRGKHAA. The chain crosses the membrane as a helical span at residues 148-168; the sequence is LGLLFVWTFSFIWTIPPVLGW. The Extracellular segment spans residues 169 to 193; sequence SSYTVSKIGTTCEPNWYSGNFHDHT. The helical transmembrane segment at 194–214 threads the bilayer; it reads FIIAFFITCFILPLGVIVVCY. Residues 215-244 lie on the Cytoplasmic side of the membrane; that stretch reads CKLIKKLRKVSNTHGRLGNARKPERQVTRM. The helical transmembrane segment at 245 to 265 threads the bilayer; the sequence is VVVMIVAFMVAWTPYAAFSIV. Topologically, residues 266–279 are extracellular; that stretch reads VTAHPSIHLDPRLA. Residues 280–300 traverse the membrane as a helical segment; that stretch reads AAPAFFSKTAAVYNPVIYVFM. An N6-(retinylidene)lysine modification is found at Lys-287. Residues 301 to 382 are Cytoplasmic-facing; sequence NKQFRKCLVQ…PIPENKVCPM (82 aa). Over residues 330-346 the composition is skewed to polar residues; the sequence is RQGMTNESHTGEMSTIA. The disordered stretch occupies residues 330 to 371; that stretch reads RQGMTNESHTGEMSTIASRIPKDGSIPEKTQEHPGERRSLAH. Residues 349-368 show a composition bias toward basic and acidic residues; that stretch reads IPKDGSIPEKTQEHPGERRS.

This sequence belongs to the G-protein coupled receptor 1 family. Opsin subfamily. In terms of tissue distribution, expressed in a subset of retinal horizontal cells as well as in retinal ganglion cells.

It is found in the membrane. The sequence is that of Opsin-VA from Rutilus rutilus (Roach).